A 109-amino-acid chain; its full sequence is uncharacterized protein (109 aa).

The helical transmembrane segment at 78-98 threads the bilayer; that stretch reads YTCIMYIGLLCMFVLLYMTVI.

The protein localises to the membrane. This is an uncharacterized protein from Saccharomyces cerevisiae (strain ATCC 204508 / S288c) (Baker's yeast).